A 446-amino-acid chain; its full sequence is tRNA modification GTPase MnmE (446 aa).

(6S)-5-formyl-5,6,7,8-tetrahydrofolate contacts are provided by arginine 28, glutamate 85, and lysine 124. The region spanning 220 to 372 is the TrmE-type G domain; sequence GLTVVLVGQP…LRAKLLQAAG (153 aa). Asparagine 230 is a K(+) binding site. GTP is bound by residues 230–235, 249–255, and 274–277; these read NVGKSS, TEIAGTT, and DTAG. Residue serine 234 participates in Mg(2+) binding. Positions 249, 251, and 254 each coordinate K(+). Threonine 255 lines the Mg(2+) pocket. Lysine 446 is a (6S)-5-formyl-5,6,7,8-tetrahydrofolate binding site.

Belongs to the TRAFAC class TrmE-Era-EngA-EngB-Septin-like GTPase superfamily. TrmE GTPase family. As to quaternary structure, homodimer. Heterotetramer of two MnmE and two MnmG subunits. The cofactor is K(+).

The protein localises to the cytoplasm. Exhibits a very high intrinsic GTPase hydrolysis rate. Involved in the addition of a carboxymethylaminomethyl (cmnm) group at the wobble position (U34) of certain tRNAs, forming tRNA-cmnm(5)s(2)U34. In Thiobacillus denitrificans (strain ATCC 25259 / T1), this protein is tRNA modification GTPase MnmE.